Reading from the N-terminus, the 619-residue chain is Dihydroxy-acid dehydratase (619 aa).

Position 81 (Asp81) interacts with Mg(2+). Residue Cys122 coordinates [2Fe-2S] cluster. Mg(2+)-binding residues include Asp123 and Lys124. N6-carboxylysine is present on Lys124. Cys201 is a [2Fe-2S] cluster binding site. Glu496 serves as a coordination point for Mg(2+). Ser522 (proton acceptor) is an active-site residue.

Belongs to the IlvD/Edd family. Homodimer. The cofactor is [2Fe-2S] cluster. Mg(2+) serves as cofactor.

It carries out the reaction (2R)-2,3-dihydroxy-3-methylbutanoate = 3-methyl-2-oxobutanoate + H2O. It catalyses the reaction (2R,3R)-2,3-dihydroxy-3-methylpentanoate = (S)-3-methyl-2-oxopentanoate + H2O. Its pathway is amino-acid biosynthesis; L-isoleucine biosynthesis; L-isoleucine from 2-oxobutanoate: step 3/4. It functions in the pathway amino-acid biosynthesis; L-valine biosynthesis; L-valine from pyruvate: step 3/4. Functionally, functions in the biosynthesis of branched-chain amino acids. Catalyzes the dehydration of (2R,3R)-2,3-dihydroxy-3-methylpentanoate (2,3-dihydroxy-3-methylvalerate) into 2-oxo-3-methylpentanoate (2-oxo-3-methylvalerate) and of (2R)-2,3-dihydroxy-3-methylbutanoate (2,3-dihydroxyisovalerate) into 2-oxo-3-methylbutanoate (2-oxoisovalerate), the penultimate precursor to L-isoleucine and L-valine, respectively. The chain is Dihydroxy-acid dehydratase from Burkholderia vietnamiensis (strain G4 / LMG 22486) (Burkholderia cepacia (strain R1808)).